We begin with the raw amino-acid sequence, 486 residues long: Hematopoietic lineage cell-specific protein (486 aa).

Residues 27–66 (FVNDISEKEQRWGAKTIEGSGRTEHINIHQLRNKVSEEHD) are involved in HAX-1 binding. Residue lysine 41 is modified to N6-acetyllysine. 3 Cortactin repeats span residues 79–115 (ASHG…SQTD), 116–152 (AARG…SQKD), and 153–189 (YSHG…SQRD). N6-acetyllysine is present on lysine 123. Tyrosine 140 is subject to Phosphotyrosine. A Cortactin 4; truncated repeat occupies 190–212 (YAKGFGGQYGIQKDRVDKSAVGF). N6-acetyllysine is present on lysine 192. At tyrosine 198 the chain carries Phosphotyrosine. Tyrosine 222 is subject to Phosphotyrosine; by FGR. A disordered region spans residues 226–430 (TPIEAASSGA…AGPSAGAGGA (205 aa)). 2 stretches are compositionally biased toward basic and acidic residues: residues 240–258 (AKFE…EEKA) and 265–276 (QQERKAVVKMSR). Lysine 241 bears the N6-acetyllysine mark. A Phosphoserine modification is found at serine 275. Position 330 is a phosphothreonine (threonine 330). The residue at position 333 (serine 333) is a Phosphoserine. The segment covering 358–367 (VVEEPVYEAA) has biased composition (low complexity). Residues 368–413 (PELEPEPEPDYEPEPETEPDYEDVGELDRQDEDAEGDYEDVLEPED) are compositionally biased toward acidic residues. Residues tyrosine 388 and tyrosine 405 each carry the phosphotyrosine; by SYK and FES modification. The region spanning 429–486 (GAGISAIALYDYQGEGSDELSFDPDDIITDIEMVDEGWWRGQCRGHFGLFPANYVKLL) is the SH3 domain.

As to quaternary structure, interacts (via SH2 domain) with FGR. Associates with the SH2 and SH3 domains of LCK. Binding to he LCK SH3 domain occurs constitutively, while binding to the LCK SH2 domain occurs only upon TCR stimulation. A similar binding pattern was observed with LYN, but not with FYN in which the FYN SH2 region associates upon TCR stimulation but the FYN SH3 region does not associate regardless of TCR stimulation. Directly associates with HAX1, through binding to its C-terminal region. Interacts with HS1BP3. Interacts with FES/FPS. Forms a multiprotein complex with LYN and ANKRD54. Phosphorylated by LYN, FYN and FGR after cross-linking of surface IgM on B-cells. Phosphorylation by LYN, FYN and FGR requires prior phosphorylation by SYK. Binds to LCK in vivo, and is tyrosine phosphorylated upon TCR stimulation. Phosphorylated by FES. In terms of tissue distribution, expressed only in tissues and cells of hematopoietic origin.

The protein localises to the mitochondrion. Substrate of the antigen receptor-coupled tyrosine kinase. Plays a role in antigen receptor signaling for both clonal expansion and deletion in lymphoid cells. May also be involved in the regulation of gene expression. This Mus musculus (Mouse) protein is Hematopoietic lineage cell-specific protein (Hcls1).